The chain runs to 292 residues: Glutamate racemase (292 aa).

Substrate is bound by residues 28–29 (DS) and 60–61 (YG). Residue cysteine 91 is the Proton donor/acceptor of the active site. Residue 92-93 (NT) coordinates substrate. Cysteine 200 serves as the catalytic Proton donor/acceptor. 201–202 (TH) serves as a coordination point for substrate.

This sequence belongs to the aspartate/glutamate racemases family.

The catalysed reaction is L-glutamate = D-glutamate. It participates in cell wall biogenesis; peptidoglycan biosynthesis. In terms of biological role, provides the (R)-glutamate required for cell wall biosynthesis. The sequence is that of Glutamate racemase from Nostoc sp. (strain PCC 7120 / SAG 25.82 / UTEX 2576).